We begin with the raw amino-acid sequence, 255 residues long: MSQEFLARILEQKAHEVEQMKLEQIQPLRQTYRLAEFLKNHQDRLQVIAEVKKASPSLGDINLDVDIVQQAQTYEENGTVMISVLTDEVFFKGHLNYLREISSQVEIPTLNKDFIIDEKQIIRARNAGATVILLIVAALSEERLKKLYDYATELGLEVLVETHNLAELEVAHRLGAEIIGVNNRNLTTFEVDLQTSVDLAPYFEEGRYYISESAIFTGQDAERLAPYFNGILVGTALMQAENVAQRIKELQIDKG.

It belongs to the TrpC family.

It catalyses the reaction 1-(2-carboxyphenylamino)-1-deoxy-D-ribulose 5-phosphate + H(+) = (1S,2R)-1-C-(indol-3-yl)glycerol 3-phosphate + CO2 + H2O. It functions in the pathway amino-acid biosynthesis; L-tryptophan biosynthesis; L-tryptophan from chorismate: step 4/5. The chain is Indole-3-glycerol phosphate synthase from Streptococcus pneumoniae (strain 70585).